The chain runs to 786 residues: E3 ubiquitin-protein ligase UHRF1 (786 aa).

In terms of domain architecture, Ubiquitin-like spans 1–78 (MWIQVRTMDG…IQLLVRQSLV (78 aa)). Phosphoserine occurs at positions 76, 98, and 102. Residues 82 to 134 (PVPSSSGGSKERDSELSDTDSGCGLAQSESDKSSNSGEAANEPEGKADEDECD) form a disordered region. 2 tudor-like regions span residues 139–213 (GLYK…ARAR) and 220–287 (DLQV…IERP). K283 participates in a covalent cross-link: Glycyl lysine isopeptide (Lys-Gly) (interchain with G-Cter in SUMO2). The tract at residues 300–305 (RKSGPS) is linker. Position 302 is a phosphoserine; by PKA (S302). Residues 303–370 (GPSCKHCKDD…EWYCPDCRID (68 aa)) form a PHD-type zinc finger. Histone H3R2me0 binding stretches follow at residues 337 to 341 (CDECD) and 357 to 359 (PPE). Position 372 is a phosphoserine (S372). A Glycyl lysine isopeptide (Lys-Gly) (interchain with G-Cter in SUMO2) cross-link involves residue K389. At K403 the chain carries N6-acetyllysine. The YDG domain maps to 423 to 586 (GPIPGIPVGT…FLVWRFLLRR (164 aa)). The interval 449-450 (HV) is required to promote base flipping. Residues 467 to 468 (AG) and D473 each bind DNA. Required for formation of a 5-methylcytosine-binding pocket stretches follow at residues 470–473 (YEDD) and 482–485 (YTGS). K550 carries the N6-acetyllysine; alternate modification. Residue K550 forms a Glycyl lysine isopeptide (Lys-Gly) (interchain with G-Cter in SUMO2); alternate linkage. Residues 626–679 (NSKQAALDKEEEDGEEGFTSPRKGKRKSKSAGGDGSSRGTPKKTKVEPYSLTTQ) are disordered. S645 carries the post-translational modification Phosphoserine; by CDK1. S655 and S662 each carry phosphoserine. K670 participates in a covalent cross-link: Glycyl lysine isopeptide (Lys-Gly) (interchain with G-Cter in SUMO2). Residues 717–756 (CICCQELVFRPITTVCQHNVCKDCLDRSFKAQVFSCPACR) form an RING-type zinc finger.

In terms of assembly, interacts with DNMT3A and DNMT3B. Interacts with DNMT1; the interaction is direct. Interacts with USP7; leading to its deubiquitination. Interacts with histone H3. Interacts with HDAC1, but not with HDAC2. Interacts with BLTP3A. Interacts with PML. Interacts with EHMT2. Binds methylated CpG containing oligonucleotides. Interacts with ZNF263; recruited to the SIX3 promoter along with other proteins involved in chromatin modification and transcriptional corepression where it contributes to transcriptional repression. Interacts with UHRF2. Interacts with FANCD2. Interacts with TET1 isoform 2; this interaction induces the recruitment of TET1 isoform 2 to replicating heterochromatin. Post-translationally, phosphorylation at Ser-302 of the linker region decreases the binding to H3K9me3. Phosphorylation at Ser-645 by CDK1 during M phase impairs interaction with USP7, preventing deubiquitination and leading to degradation by the proteasome. Ubiquitinated; which leads to proteasomal degradation. Autoubiquitinated; interaction with USP7 leads to deubiquitination and prevents degradation. Ubiquitination and degradation takes place during M phase, when phosphorylation at Ser-645 prevents interaction with USP7 and subsequent deubiquitination. Polyubiquitination may be stimulated by DNA damage.

The protein localises to the nucleus. The catalysed reaction is S-ubiquitinyl-[E2 ubiquitin-conjugating enzyme]-L-cysteine + [acceptor protein]-L-lysine = [E2 ubiquitin-conjugating enzyme]-L-cysteine + N(6)-ubiquitinyl-[acceptor protein]-L-lysine.. It functions in the pathway protein modification; protein ubiquitination. Its function is as follows. Multidomain protein that acts as a key epigenetic regulator by bridging DNA methylation and chromatin modification. Specifically recognizes and binds hemimethylated DNA at replication forks via its YDG domain and recruits DNMT1 methyltransferase to ensure faithful propagation of the DNA methylation patterns through DNA replication. In addition to its role in maintenance of DNA methylation, also plays a key role in chromatin modification: through its tudor-like regions and PHD-type zinc fingers, specifically recognizes and binds histone H3 trimethylated at 'Lys-9' (H3K9me3) and unmethylated at 'Arg-2' (H3R2me0), respectively, and recruits chromatin proteins. Enriched in pericentric heterochromatin where it recruits different chromatin modifiers required for this chromatin replication. Also localizes to euchromatic regions where it negatively regulates transcription possibly by impacting DNA methylation and histone modifications. Has E3 ubiquitin-protein ligase activity by mediating the ubiquitination of target proteins such as histone H3 and PML. It is still unclear how E3 ubiquitin-protein ligase activity is related to its role in chromatin in vivo. Plays a role in DNA repair by cooperating with UHRF2 to ensure recruitment of FANCD2 to interstrand cross-links (ICLs) leading to FANCD2 activation. Plays a pivotal role in the establishment of correct spindle architecture by catalyzing the 'Lys-63'-linked ubiquitination of KIF11, thereby controlling KIF11 localization on the spindle. The protein is E3 ubiquitin-protein ligase UHRF1 (UHRF1) of Bos taurus (Bovine).